The primary structure comprises 400 residues: Exodeoxyribonuclease 7 large subunit (400 aa).

The protein belongs to the XseA family. As to quaternary structure, heterooligomer composed of large and small subunits.

The protein localises to the cytoplasm. It carries out the reaction Exonucleolytic cleavage in either 5'- to 3'- or 3'- to 5'-direction to yield nucleoside 5'-phosphates.. Its function is as follows. Bidirectionally degrades single-stranded DNA into large acid-insoluble oligonucleotides, which are then degraded further into small acid-soluble oligonucleotides. The chain is Exodeoxyribonuclease 7 large subunit from Clostridium perfringens (strain 13 / Type A).